We begin with the raw amino-acid sequence, 260 residues long: MATPPKRSCPSPAASSEGTRIKKISIEGNIAAGKSTFVNILKQVCEDWEVVPEPVARWCNVQSTQDEFEELTTSQKSGGNVLQMMYEKPERWSFTFQSYACLSRIRAQLAALNGKLKDAEKPVLFFERSVYSDRYIFASNLYESDCMNETEWTIYQDWHDWMNNQFGQSLELDGIIYLRATPEKCLNRIYLRGRNEEQGIPLEYLEKLHYKHESWLLHRTLKTNFDYLQEVPILTLDVNEDFKDKHDSLIEKVKDFLSTL.

Phosphoserine; by CK1 is present on residues Ser-11 and Ser-15. 28 to 36 (GNIAAGKST) lines the ATP pocket. Glu-53 is a binding site for substrate. Thr-72 bears the Phosphothreonine; by CK1 mark. Phosphoserine; by CK1 is present on Ser-74. Residues Tyr-86 and Gln-97 each contribute to the substrate site. Residue Glu-127 is the Proton acceptor of the active site. Substrate is bound by residues Arg-128 and Asp-133. 188 to 192 (RIYLR) is an ATP binding site. Glu-197 lines the substrate pocket. Position 240 to 242 (240 to 242 (EDF)) interacts with ATP.

This sequence belongs to the DCK/DGK family. As to quaternary structure, homodimer. Post-translationally, phosphorylated and activated in vitro upon phosphorylation at Ser-74 by CSNK1D/CK1.

Its subcellular location is the nucleus. It catalyses the reaction 2'-deoxycytidine + a ribonucleoside 5'-triphosphate = dCMP + a ribonucleoside 5'-diphosphate + H(+). The enzyme catalyses 2'-deoxyadenosine + ATP = dAMP + ADP + H(+). It carries out the reaction 2'-deoxyguanosine + ATP = dGMP + ADP + H(+). Phosphorylates the deoxyribonucleosides deoxycytidine, deoxyguanosine and deoxyadenosine. The polypeptide is Deoxycytidine kinase (DCK) (Bos taurus (Bovine)).